We begin with the raw amino-acid sequence, 102 residues long: Small ribosomal subunit protein uS10 (102 aa).

This sequence belongs to the universal ribosomal protein uS10 family. As to quaternary structure, part of the 30S ribosomal subunit.

Functionally, involved in the binding of tRNA to the ribosomes. In Nitrosospira multiformis (strain ATCC 25196 / NCIMB 11849 / C 71), this protein is Small ribosomal subunit protein uS10.